Reading from the N-terminus, the 232-residue chain is BTB/POZ domain-containing protein KCTD11 (232 aa).

The 49-residue stretch at 1–49 (MLGAMFRAGTPMPPNLNSQGGGHYFIDRDGKAFRHILNFLRLGRLDLPR) folds into the BTB domain.

As to quaternary structure, homopentamer. Interacts with KCTD6 and KCTD21; KCTD11 and KCTD6 or KCTD21 may associate in pentameric assemblies. Component of the BCR(KCTD11) E3 ubiquitin ligase complex, at least composed of CUL3 and KCTD11 and RBX1. Interacts (via BTB domain) with CUL3; initially a 4:4 stoichiometry has been reported, however, electron microscopy revealed pentameric states of the BTB domain. Higher expression in cerebellum than in whole brain and lower expression in medulloblastoma.

The protein operates within protein modification; protein ubiquitination. Functionally, plays a role as a marker and a regulator of neuronal differentiation; Up-regulated by a variety of neurogenic signals, such as retinoic acid, epidermal growth factor/EGF and NGFB/nerve growth factor. Induces apoptosis, growth arrest and the expression of cyclin-dependent kinase inhibitor CDKN1B. Plays a role as a tumor repressor and inhibits cell growth and tumorigenicity of medulloblastoma (MDB). Acts as a probable substrate-specific adapter for a BCR (BTB-CUL3-RBX1) E3 ubiquitin-protein ligase complex towards HDAC1. Functions as antagonist of the Hedgehog pathway on cell proliferation and differentiation by affecting the nuclear transfer of transcription factor GLI1, thus maintaining cerebellar granule cells in undifferentiated state, this effect probably occurs via HDAC1 down-regulation, keeping GLI1 acetylated and inactive. When knock-down, Hedgehog antagonism is impaired and proliferation of granule cells is sustained. Activates the caspase cascade. This Homo sapiens (Human) protein is BTB/POZ domain-containing protein KCTD11 (KCTD11).